The sequence spans 325 residues: 1-aminocyclopropane-1-carboxylate oxidase 2 (325 aa).

Residues 157–257 enclose the Fe2OG dioxygenase domain; that stretch reads PTFGTKVSNY…RMSIASFYNP (101 aa). 3 residues coordinate Fe cation: histidine 181, aspartate 183, and histidine 238.

Belongs to the iron/ascorbate-dependent oxidoreductase family. Fe cation serves as cofactor.

It carries out the reaction 1-aminocyclopropane-1-carboxylate + L-ascorbate + O2 = ethene + L-dehydroascorbate + hydrogen cyanide + CO2 + 2 H2O. It functions in the pathway alkene biosynthesis; ethylene biosynthesis via S-adenosyl-L-methionine; ethylene from S-adenosyl-L-methionine: step 2/2. The sequence is that of 1-aminocyclopropane-1-carboxylate oxidase 2 (ACO2) from Doritaenopsis sp. (Moth orchid).